Here is a 79-residue protein sequence, read N- to C-terminus: Short neurotoxin 2 (79 aa).

Residues 1–19 form the signal peptide; the sequence is PLLLTLVVVTIVCLDLGYT. Intrachain disulfides connect cysteine 22/cysteine 41, cysteine 36/cysteine 58, cysteine 60/cysteine 71, and cysteine 72/cysteine 77.

Belongs to the three-finger toxin family. Short-chain subfamily. Type I alpha-neurotoxin sub-subfamily. In terms of tissue distribution, expressed by the venom gland.

The protein localises to the secreted. Functionally, binds to muscle nicotinic acetylcholine receptor (nAChR) and inhibit acetylcholine from binding to the receptor, thereby impairing neuromuscular transmission. This Hydrophis cyanocinctus (Asian annulated sea snake) protein is Short neurotoxin 2.